The following is a 514-amino-acid chain: Xylose import ATP-binding protein XylG (514 aa).

2 ABC transporter domains span residues 7–246 (FEMR…VGRE) and 263–508 (LEAR…IHAE). 39-46 (GENGAGKS) is an ATP binding site.

It belongs to the ABC transporter superfamily. Xylose importer (TC 3.A.1.2.4) family. The complex is composed of two ATP-binding proteins (XylG), two transmembrane proteins (XylH) and a solute-binding protein (XylF).

The protein localises to the cell inner membrane. It catalyses the reaction D-xylose(out) + ATP + H2O = D-xylose(in) + ADP + phosphate + H(+). In terms of biological role, part of the ABC transporter complex XylFGH involved in xylose import. Responsible for energy coupling to the transport system. The polypeptide is Xylose import ATP-binding protein XylG (Ralstonia nicotianae (strain ATCC BAA-1114 / GMI1000) (Ralstonia solanacearum)).